The chain runs to 329 residues: Acetyl-coenzyme A carboxylase carboxyl transferase subunit alpha (329 aa).

A CoA carboxyltransferase C-terminal domain is found at Gln40–Glu294.

The protein belongs to the AccA family. Acetyl-CoA carboxylase is a heterohexamer composed of biotin carboxyl carrier protein (AccB), biotin carboxylase (AccC) and two subunits each of ACCase subunit alpha (AccA) and ACCase subunit beta (AccD).

The protein resides in the cytoplasm. The catalysed reaction is N(6)-carboxybiotinyl-L-lysyl-[protein] + acetyl-CoA = N(6)-biotinyl-L-lysyl-[protein] + malonyl-CoA. Its pathway is lipid metabolism; malonyl-CoA biosynthesis; malonyl-CoA from acetyl-CoA: step 1/1. In terms of biological role, component of the acetyl coenzyme A carboxylase (ACC) complex. First, biotin carboxylase catalyzes the carboxylation of biotin on its carrier protein (BCCP) and then the CO(2) group is transferred by the carboxyltransferase to acetyl-CoA to form malonyl-CoA. This is Acetyl-coenzyme A carboxylase carboxyl transferase subunit alpha from Parasynechococcus marenigrum (strain WH8102).